The following is a 453-amino-acid chain: Tubulin alpha-1/2/3 chain (453 aa).

Gln-11 is a binding site for GTP. At Lys-40 the chain carries N6-acetyllysine. The GTP site is built by Glu-71, Ser-140, Gly-144, Thr-145, Thr-179, Asn-206, and Asn-228. Position 71 (Glu-71) interacts with Mg(2+). The active site involves Glu-254. The disordered stretch occupies residues 429-453; the sequence is EKDYEEVGTESQEGDGEEGEDGGDQ. Over residues 431–453 the composition is skewed to acidic residues; it reads DYEEVGTESQEGDGEEGEDGGDQ.

The protein belongs to the tubulin family. As to quaternary structure, dimer of alpha and beta chains. A typical microtubule is a hollow water-filled tube with an outer diameter of 25 nm and an inner diameter of 15 nM. Alpha-beta heterodimers associate head-to-tail to form protofilaments running lengthwise along the microtubule wall with the beta-tubulin subunit facing the microtubule plus end conferring a structural polarity. Microtubules usually have 13 protofilaments but different protofilament numbers can be found in some organisms and specialized cells. Mg(2+) serves as cofactor. In terms of processing, acetylation of alpha chains at Lys-40 stabilizes microtubules and affects affinity and processivity of microtubule motors. This modification has a role in multiple cellular functions, ranging from cell motility, cell cycle progression or cell differentiation to intracellular trafficking and signaling.

It localises to the cytoplasm. Its subcellular location is the cytoskeleton. The catalysed reaction is GTP + H2O = GDP + phosphate + H(+). Functionally, tubulin is the major constituent of microtubules, a cylinder consisting of laterally associated linear protofilaments composed of alpha- and beta-tubulin heterodimers. Microtubules grow by the addition of GTP-tubulin dimers to the microtubule end, where a stabilizing cap forms. Below the cap, tubulin dimers are in GDP-bound state, owing to GTPase activity of alpha-tubulin. In Naegleria gruberi (Amoeba), this protein is Tubulin alpha-1/2/3 chain (TBA1).